A 491-amino-acid chain; its full sequence is FAD-dependent monooxygenase idtM (491 aa).

Residues glutamate 34, glycine 48, arginine 107, aspartate 307, and alanine 320 each coordinate FAD. A helical transmembrane segment spans residues 448 to 468 (ILSLVYVVAGLAMMYMSIYLV).

This sequence belongs to the paxM FAD-dependent monooxygenase family. Requires FAD as cofactor.

It localises to the membrane. Its pathway is secondary metabolite biosynthesis. FAD-dependent monooxygenase; part of the gene cluster that mediates the biosynthesis of paspalitrems, indole-diterpene (IDT) mycotoxins that are potent tremorgens in mammals. The geranylgeranyl diphosphate (GGPP) synthase idtG is proposed to catalyze the first step in IDT biosynthesis via catalysis of a series of iterative condensations of isopentenyl diphosphate (IPP) with dimethylallyl diphosphate (DMAPP), geranyl diphosphate (GPP), and farnesyl diphosphate (FPP), to form GGPP. Condensation of indole-3-glycerol phosphate with GGPP by the prenyltransferase idtC then forms 3-geranylgeranylindole (3-GGI). Epoxidation of the two terminal alkenes of the geranylgeranyl moiety by the FAD-dependent monooxygenase idtM, and cyclization by the terpene cyclase idtB then leads to the production of paspaline. The cytochrome P450 monooxygenase idtP then catalyzes oxidative elimination of the pendant methyl group at C-12 of paspaline and generates the C-10 ketone to yield 13-desoxypaxilline. The cytochrome P450 monooxygenase idtQ may catalyze the C-13 oxidation of 13-desoxypaxilline to afford paxilline. Considering that both paspalicine and paxilline were detected in C.paspali, idtQ also catalyzes the formation of paspalinine from 13-desoxypaxilline via paspalicine as an intermediate. Finally, the alpha-prenyltransferase idtF prenylates paspalinine at the C-20 or the C-21 positions to yield paspalitrems A and C, respectively. The hydroxylation of paspalitrem A at C-32 by a still unknown oxidase affords paspalitrem B. This chain is FAD-dependent monooxygenase idtM, found in Claviceps paspali (Rye ergot fungus).